A 195-amino-acid chain; its full sequence is MNVKKAELVTSAVKPEQYPDGGRPEVALAGRSNVGKSSFINKMINRKNLARTSSKPGKTQTLNFYLINDSFYFVDVPGYGFARVSKQERQKWGNMMETYFTTREALKAAVLLVDLRHPPTKDDVMMYEFLKHYEIPVIVIATKADKVPRGKHQKHAKIARETLRMADGDPLILFSAETGQGKDEAWAALLPFVAS.

Residues Gly22 to Ser195 form the EngB-type G domain. GTP is bound by residues Gly30 to Ser37, Gly57 to Thr61, Asp75 to Gly78, Thr142 to Asp145, and Phe174 to Ala176. Positions 37 and 59 each coordinate Mg(2+).

This sequence belongs to the TRAFAC class TrmE-Era-EngA-EngB-Septin-like GTPase superfamily. EngB GTPase family. The cofactor is Mg(2+).

Functionally, necessary for normal cell division and for the maintenance of normal septation. This chain is Probable GTP-binding protein EngB, found in Geobacillus kaustophilus (strain HTA426).